The sequence spans 198 residues: Formate-dependent nitrite reductase complex subunit NrfG (198 aa).

TPR repeat units lie at residues 73–106 and 144–177; these read SEQW…RGEN and ITAL…NSPR.

In terms of biological role, required for formate-dependent nitrite reduction. Not required for the biosynthesis of any of the c-type cytochromes nor for the secretion of the periplasmic cytochromes. The sequence is that of Formate-dependent nitrite reductase complex subunit NrfG (nrfG) from Escherichia coli O157:H7.